The following is a 336-amino-acid chain: Potassium channel subfamily K member 1 (336 aa).

The Cytoplasmic segment spans residues 1–20 (MLQSLAGSSCVRLVERHRSA). Residues 21-41 (WCFGFLVLGYLLYLVFGAVVF) form a helical membrane-spanning segment. At 42 to 103 (SSVELPYEDL…SNASGNWNWD (62 aa)) the chain is on the extracellular side. N95 carries an N-linked (GlcNAc...) asparagine glycan. Positions 104 to 116 (FTSALFFASTVLS) form an intramembrane region, helical. An intramembrane segment occupies 117 to 122 (TTGYGH). Residues 117–122 (TTGYGH) form a selectivity filter 1 region. Over 123 to 132 (TVPLSDGGKA) the chain is Extracellular. A helical membrane pass occupies residues 133 to 156 (FCIIYSVIGIPFTLLFLTAVVQRV). Residues 157-181 (TVHVTRRPVLYFHIRWGFSKQVVAI) lie on the Cytoplasmic side of the membrane. Residues 182–202 (VHAVLLGFVTVSCFFFIPAAV) form a helical membrane-spanning segment. Residues 203–211 (FSVLEDDWN) are Extracellular-facing. Residues 212–224 (FLESFYFCFISLS) constitute an intramembrane region (helical). A selectivity filter 2 region spans residues 225–230 (TIGLGD). Residues 225-231 (TIGLGDY) lie within the membrane without spanning it. The Extracellular portion of the chain corresponds to 232-243 (VPGEGYNQKFRE). Residues 244–267 (LYKIGITCYLLLGLIAMLVVLETF) form a helical membrane-spanning segment. Residues 268–336 (CELHELKKFR…PPYEDGSADH (69 aa)) are Cytoplasmic-facing. A Glycyl lysine isopeptide (Lys-Gly) (interchain with G-Cter in SUMO) cross-link involves residue K274. An important for intracellular retention in recycling endosomes region spans residues 293–299 (IMEHDQL). The tract at residues 310-336 (GLKEEQKQSEPFVASQSPPYEDGSADH) is disordered. At S326 the chain carries Phosphoserine.

Belongs to the two pore domain potassium channel (TC 1.A.1.8) family. In terms of assembly, homodimer; disulfide-linked. Heterodimer with KCNK2; disulfide-linked. In astrocytes, forms mostly heterodimeric potassium channels with KCNK2, with only a minor proportion of functional channels containing homodimeric KCNK1. Interacts with KCNK3 and KCNK9, forming functional heterodimeric channels. Interacts with GNG4. Identified in a complex with PSD and ARF6; interacts only with PSD that is bound to ARF6. Interacts with UBE2I. Sumoylation is controversial. Sumoylated by UBE2I. Not sumoylated when expressed in xenopus oocytes or mammalian cells. Sumoylation inactivates the channel, but does not interfere with expression at the cell membrane. Sumoylation of a single subunit is sufficient to silence the dimeric channel. Sumoylation of KCNK1 is sufficient to silence heterodimeric channels formed by KCNK1 and KCNK3 or KCNK9. Desumoylated by SENP1; this activates the channel. Desumoylated by SENP1; this strongly increases halothane-mediated activation of heterodimeric channels formed with KCNK9. SENP1 treatment has no effect. In terms of tissue distribution, detected in spiral ganglion neurons. Detected in hippocampus CA1 and CA1 regions and in the molecular layer of the dentate gyrus. Detected on hippocampus astrocytes. Highly expressed in the stria vascularis in the cochlea. Detected in pancreas islet beta cells. Detected in kidney, at brush border membranes in proximal tubules and in cytoplasmic structures in distal convoluted tubules, thick ascending limbs and collecting ducts (at protein level). Widely expressed. Detected in spiral ganglion cells. Highest expression in brain, kidney, thyroid, salivary gland, adrenal gland, prostate, epididymis, uterus, placenta, colon and jejunum. Moderate expression in eyes, pituitary, pancreas, smooth muscle, testis and ovary. Very low levels in lung, aorta, liver, heart, skeletal muscle, thymus and spleen. In the brain, highest expression in cerebellar granule cells, brainstem, hippocampus and cerebral cortex.

The protein localises to the cell membrane. It is found in the recycling endosome. The protein resides in the apical cell membrane. Its subcellular location is the cytoplasmic vesicle. It localises to the perikaryon. The protein localises to the cell projection. It is found in the dendrite. The protein resides in the synaptic cell membrane. It catalyses the reaction K(+)(in) = K(+)(out). The enzyme catalyses NH4(+)(in) = NH4(+)(out). The catalysed reaction is Na(+)(in) = Na(+)(out). It carries out the reaction Rb(+)(in) = Rb(+)(out). It catalyses the reaction Cs(+)(in) = Cs(+)(out). The enzyme catalyses Li(+)(in) = Li(+)(out). The catalysed reaction is L-glutamate(out) = L-glutamate(in). It carries out the reaction chloride(in) = chloride(out). With respect to regulation, inhibited by quinine, quinidine, barium, and internal acidification. Its function is as follows. Ion channel that contributes to passive transmembrane potassium transport and to the regulation of the resting membrane potential in brain astrocytes, but also in kidney and in other tissues. Forms dimeric channels through which potassium ions pass in accordance with their electrochemical gradient. The channel is selective for K(+) ions at physiological potassium concentrations and at neutral pH, but becomes permeable to Na(+) at subphysiological K(+) levels and upon acidification of the extracellular medium. The homodimer has very low potassium channel activity, when expressed in heterologous systems, and can function as weakly inward rectifying potassium channel. Channel activity is modulated by activation of serotonin receptors. Heterodimeric channels containing KCNK1 and KCNK2 have much higher activity, and may represent the predominant form in astrocytes. Heterodimeric channels containing KCNK1 and KCNK3 or KCNK9 have much higher activity. Heterodimeric channels formed by KCNK1 and KCNK9 may contribute to halothane-sensitive currents. Mediates outward rectifying potassium currents in dentate gyrus granule cells and contributes to the regulation of their resting membrane potential. Contributes to the regulation of action potential firing in dentate gyrus granule cells and down-regulates their intrinsic excitability. In astrocytes, the heterodimer formed by KCNK1 and KCNK2 is required for rapid glutamate release in response to activation of G-protein coupled receptors, such as F2R and CNR1. Required for normal ion and water transport in the kidney. Contributes to the regulation of the resting membrane potential of pancreatic beta cells. The low channel activity of homodimeric KCNK1 may be due to sumoylation. The low channel activity may be due to rapid internalization from the cell membrane and retention in recycling endosomes. Permeable to monovalent cations with ion selectivity for K(+) &gt; Rb(+) &gt;&gt; NH4(+) &gt;&gt; Cs(+) = Na(+) = Li(+). In Mus musculus (Mouse), this protein is Potassium channel subfamily K member 1 (Kcnk1).